A 194-amino-acid polypeptide reads, in one-letter code: Fe/S biogenesis protein NfuA (194 aa).

Residues cysteine 151 and cysteine 154 each contribute to the [4Fe-4S] cluster site.

Belongs to the NfuA family. In terms of assembly, homodimer. [4Fe-4S] cluster serves as cofactor.

Involved in iron-sulfur cluster biogenesis. Binds a 4Fe-4S cluster, can transfer this cluster to apoproteins, and thereby intervenes in the maturation of Fe/S proteins. Could also act as a scaffold/chaperone for damaged Fe/S proteins. This chain is Fe/S biogenesis protein NfuA, found in Aliivibrio salmonicida (strain LFI1238) (Vibrio salmonicida (strain LFI1238)).